Consider the following 260-residue polypeptide: Glutathione S-transferase domain-containing protein DDB_G0280881 (260 aa).

One can recognise a GST N-terminal domain in the interval 7–96; it reads KVDFIFYTNG…YLAQKYNTFL (90 aa). The region spanning 102–228 is the GST C-terminal domain; it reads NPKENSDVIT…QQISEGFKNF (127 aa).

It belongs to the GST superfamily.

This Dictyostelium discoideum (Social amoeba) protein is Glutathione S-transferase domain-containing protein DDB_G0280881.